A 153-amino-acid chain; its full sequence is 6,7-dimethyl-8-ribityllumazine synthase 1 (153 aa).

5-amino-6-(D-ribitylamino)uracil-binding positions include F16, 47–49 (ALE), and 76–78 (MVI). 81–82 (ET) serves as a coordination point for (2S)-2-hydroxy-3-oxobutyl phosphate. H84 (proton donor) is an active-site residue. Residue N109 participates in 5-amino-6-(D-ribitylamino)uracil binding. R123 serves as a coordination point for (2S)-2-hydroxy-3-oxobutyl phosphate.

This sequence belongs to the DMRL synthase family.

The catalysed reaction is (2S)-2-hydroxy-3-oxobutyl phosphate + 5-amino-6-(D-ribitylamino)uracil = 6,7-dimethyl-8-(1-D-ribityl)lumazine + phosphate + 2 H2O + H(+). It participates in cofactor biosynthesis; riboflavin biosynthesis; riboflavin from 2-hydroxy-3-oxobutyl phosphate and 5-amino-6-(D-ribitylamino)uracil: step 1/2. In terms of biological role, catalyzes the formation of 6,7-dimethyl-8-ribityllumazine by condensation of 5-amino-6-(D-ribitylamino)uracil with 3,4-dihydroxy-2-butanone 4-phosphate. This is the penultimate step in the biosynthesis of riboflavin. The protein is 6,7-dimethyl-8-ribityllumazine synthase 1 of Rhizobium meliloti (strain 1021) (Ensifer meliloti).